The following is a 306-amino-acid chain: MKHFLTLRDFSKEEILSLVNHASELKKEPKKLLQDKTLAMIFEKNSTRTRMAFELAITELGGKALFLSSNDLQLSRGEPVKDTARVIGTMVDFVMMRVNKHETLLEFARYSKAPVINALSEFYHPTQVLGDLLTIKEWNKMQNGIAKVAFIGDSNNMCNSWLIVAAILGFEFSIAIPKNYKISPEIWEFAMKQALISGAKISLSHDKFEALKDKDVVITDTWVSMGEENEKERKIKEFEGFMIDEKAMSVANKDAILLHCLPAYRGYEVSEEIFEKHADVIFEEARNRLYVVKALLCFLDNQRGRE.

Residues 46–49 (STRT), Q73, R97, and 124–127 (HPTQ) each bind carbamoyl phosphate. L-ornithine-binding positions include N156, D220, and 224–225 (SM). Residues 260 to 261 (CL) and R288 contribute to the carbamoyl phosphate site.

The protein belongs to the aspartate/ornithine carbamoyltransferase superfamily. OTCase family.

It localises to the cytoplasm. It catalyses the reaction carbamoyl phosphate + L-ornithine = L-citrulline + phosphate + H(+). It participates in amino-acid degradation; L-arginine degradation via ADI pathway; carbamoyl phosphate from L-arginine: step 2/2. In terms of biological role, reversibly catalyzes the transfer of the carbamoyl group from carbamoyl phosphate (CP) to the N(epsilon) atom of ornithine (ORN) to produce L-citrulline. The polypeptide is Ornithine carbamoyltransferase (Campylobacter jejuni subsp. jejuni serotype O:6 (strain 81116 / NCTC 11828)).